Consider the following 695-residue polypeptide: Putative pentatricopeptide repeat-containing protein At1g77010, mitochondrial (695 aa).

A mitochondrion-targeting transit peptide spans 1 to 64 (MILKYNSSYR…KGFLSSIVIV (64 aa)). 17 PPR repeats span residues 61–91 (IVIV…MPDR), 92–122 (NYFS…MPER), 123–157 (DGYS…DVVT), 159–184 (NSLL…LNFS), 186–220 (DAIT…GVEC), 221–251 (DSKM…IREP), 252–282 (DDHS…KSNR), 283–313 (CVIL…MRNE), 317–351 (DSRT…GLID), 352–382 (DIVV…VESY), 383–417 (DTIL…SLIS), 418–448 (WNSM…DLPT), 449–483 (DEVS…GLDS), 484–514 (DQVV…MVKS), 515–549 (DEVP…GIRP), 550–585 (TQIT…GFVP), and 586–616 (DKEH…MPFD). A type E motif; degenerate region spans residues 621–695 (MWSSILRGCV…KNPGSSWTDC (75 aa)).

It belongs to the PPR family. PCMP-E subfamily.

It localises to the mitochondrion. In Arabidopsis thaliana (Mouse-ear cress), this protein is Putative pentatricopeptide repeat-containing protein At1g77010, mitochondrial (PCMP-E5).